The chain runs to 226 residues: Isoprenyl transferase (226 aa).

The active site involves Asp-12. A Mg(2+)-binding site is contributed by Asp-12. Substrate contacts are provided by residues 13 to 16, Trp-17, Lys-25, His-29, and 57 to 59; these read GNAR and SSE. Catalysis depends on Asn-60, which acts as the Proton acceptor. Substrate contacts are provided by residues Trp-61, Arg-63, Arg-174, and 180 to 182; that span reads RIS. Residue Glu-193 coordinates Mg(2+).

It belongs to the UPP synthase family. As to quaternary structure, homodimer. Requires Mg(2+) as cofactor.

Functionally, catalyzes the condensation of isopentenyl diphosphate (IPP) with allylic pyrophosphates generating different type of terpenoids. This Rickettsia sibirica (strain ATCC VR-151 / 246) protein is Isoprenyl transferase.